The sequence spans 238 residues: Probable transcriptional regulatory protein YeeN (238 aa).

This sequence belongs to the TACO1 family. YeeN subfamily.

It is found in the cytoplasm. This chain is Probable transcriptional regulatory protein YeeN, found in Salmonella choleraesuis (strain SC-B67).